We begin with the raw amino-acid sequence, 642 residues long: Threonine--tRNA ligase (642 aa).

The TGS domain occupies 1–61 (MPVIRFYDGS…REDAFIEFVD (61 aa)). Residues 243–534 (DHRKIGKFLQ…LIEECSGNLP (292 aa)) form a catalytic region. Residues cysteine 334, histidine 385, and histidine 511 each coordinate Zn(2+).

It belongs to the class-II aminoacyl-tRNA synthetase family. In terms of assembly, homodimer. Zn(2+) is required as a cofactor.

The protein localises to the cytoplasm. It catalyses the reaction tRNA(Thr) + L-threonine + ATP = L-threonyl-tRNA(Thr) + AMP + diphosphate + H(+). In terms of biological role, catalyzes the attachment of threonine to tRNA(Thr) in a two-step reaction: L-threonine is first activated by ATP to form Thr-AMP and then transferred to the acceptor end of tRNA(Thr). Also edits incorrectly charged L-seryl-tRNA(Thr). The polypeptide is Threonine--tRNA ligase (Buchnera aphidicola subsp. Acyrthosiphon pisum (strain Tuc7)).